Consider the following 382-residue polypeptide: RNA exonuclease 3 (382 aa).

Positions 223-369 (VLALDCEMAY…EDAIAAMDVV (147 aa)) constitute an Exonuclease domain.

This sequence belongs to the REXO1/REXO3 family.

It is found in the cytoplasm. The protein resides in the nucleus. Functionally, 3' to 5' exoribonuclease required for proper 3' end maturation of MRP RNA and of the U5L snRNA. The sequence is that of RNA exonuclease 3 (REX3) from Eremothecium gossypii (strain ATCC 10895 / CBS 109.51 / FGSC 9923 / NRRL Y-1056) (Yeast).